A 620-amino-acid chain; its full sequence is 1-deoxy-D-xylulose-5-phosphate synthase (620 aa).

Residues histidine 80 and 121-123 contribute to the thiamine diphosphate site; that span reads GHS. Aspartate 152 serves as a coordination point for Mg(2+). Thiamine diphosphate-binding positions include 153-154, asparagine 181, tyrosine 288, and glutamate 370; that span reads GA. Residue asparagine 181 coordinates Mg(2+).

It belongs to the transketolase family. DXPS subfamily. In terms of assembly, homodimer. Mg(2+) serves as cofactor. It depends on thiamine diphosphate as a cofactor.

The catalysed reaction is D-glyceraldehyde 3-phosphate + pyruvate + H(+) = 1-deoxy-D-xylulose 5-phosphate + CO2. It functions in the pathway metabolic intermediate biosynthesis; 1-deoxy-D-xylulose 5-phosphate biosynthesis; 1-deoxy-D-xylulose 5-phosphate from D-glyceraldehyde 3-phosphate and pyruvate: step 1/1. Functionally, catalyzes the acyloin condensation reaction between C atoms 2 and 3 of pyruvate and glyceraldehyde 3-phosphate to yield 1-deoxy-D-xylulose-5-phosphate (DXP). In Salmonella heidelberg (strain SL476), this protein is 1-deoxy-D-xylulose-5-phosphate synthase.